The sequence spans 213 residues: Glutathione S-transferase DHAR2 (213 aa).

Cys6 carries the post-translational modification S-glutathionyl cysteine. Positions 8 and 19 each coordinate glutathione. Residues Lys8 and Asp19 each coordinate L-ascorbate. The region spanning 10 to 83 (AVGAPDVLGD…DVIVGLLEEK (74 aa)) is the GST N-terminal domain. Cys20 is subject to S-glutathionyl cysteine. The active-site Nucleophile is Cys20. The Glutathione-binding motif lies at 20 to 25 (CPFSQR). Residues Lys47, Val60, Ser73, His160, and Trp207 each contribute to the glutathione site. In terms of domain architecture, GST C-terminal spans 84–213 (YPEPSLKTPP…VAGWESKVNA (130 aa)). Lys210 is a binding site for L-ascorbate.

It belongs to the GST superfamily. DHAR family. As to quaternary structure, monomer. Post-translationally, spontaneous S-glutathionylation in the presence of oxidized glutathione (GSSG).

The protein resides in the cytoplasm. Its subcellular location is the cytosol. It catalyses the reaction RX + glutathione = an S-substituted glutathione + a halide anion + H(+). The catalysed reaction is L-dehydroascorbate + 2 glutathione = glutathione disulfide + L-ascorbate. Functionally, displays a dual function. As a soluble protein, exhibits glutathione-dependent thiol transferase and dehydroascorbate (DHA) reductase activities. Exhibits glutathione-dependent thiol transferase and dehydroascorbate (DHA) reductase activities. Key component of the ascorbate recycling system. Involved in the redox homeostasis, especially in scavenging of ROS under oxidative stresses. Plays a role in ozone tolerance. This is Glutathione S-transferase DHAR2 (DHAR2) from Arabidopsis thaliana (Mouse-ear cress).